A 208-amino-acid polypeptide reads, in one-letter code: Methylthioribulose-1-phosphate dehydratase (208 aa).

His99 and His101 together coordinate Zn(2+).

It belongs to the aldolase class II family. MtnB subfamily. Zn(2+) is required as a cofactor.

It carries out the reaction 5-(methylsulfanyl)-D-ribulose 1-phosphate = 5-methylsulfanyl-2,3-dioxopentyl phosphate + H2O. It participates in amino-acid biosynthesis; L-methionine biosynthesis via salvage pathway; L-methionine from S-methyl-5-thio-alpha-D-ribose 1-phosphate: step 2/6. In terms of biological role, catalyzes the dehydration of methylthioribulose-1-phosphate (MTRu-1-P) into 2,3-diketo-5-methylthiopentyl-1-phosphate (DK-MTP-1-P). The chain is Methylthioribulose-1-phosphate dehydratase from Aquifex aeolicus (strain VF5).